We begin with the raw amino-acid sequence, 469 residues long: Glutamine synthetase (469 aa).

The region spanning 13–97 (HEVKFVDLRF…IRCDILEPGT (85 aa)) is the GS beta-grasp domain. The region spanning 105–469 (PRSIAKRAED…PVEFELYYSV (365 aa)) is the GS catalytic domain. Residues glutamate 130 and glutamate 132 each contribute to the Mg(2+) site. ATP is bound at residue glutamate 208. Positions 213 and 221 each coordinate Mg(2+). L-glutamate contacts are provided by residues 265 to 266 (NG) and glycine 266. Histidine 270 is a binding site for Mg(2+). ATP contacts are provided by residues 272–274 (HMS) and serine 274. Arginine 322, glutamate 328, and arginine 340 together coordinate L-glutamate. ATP-binding residues include arginine 340, arginine 345, and lysine 353. A Mg(2+)-binding site is contributed by glutamate 358. Arginine 360 is a binding site for L-glutamate. Tyrosine 398 bears the O-AMP-tyrosine mark.

Belongs to the glutamine synthetase family. Oligomer of 12 subunits arranged in the form of two hexameric ring. Mg(2+) is required as a cofactor.

Its subcellular location is the cytoplasm. It carries out the reaction L-glutamate + NH4(+) + ATP = L-glutamine + ADP + phosphate + H(+). With respect to regulation, the activity of this enzyme could be controlled by adenylation under conditions of abundant glutamine. Catalyzes the ATP-dependent biosynthesis of glutamine from glutamate and ammonia. The protein is Glutamine synthetase of Escherichia coli O157:H7.